The primary structure comprises 91 residues: Potassium channel toxin AaTXK-beta (91 aa).

Positions Met-1–Cys-19 are cleaved as a signal peptide. The propeptide occupies Gly-20 to Gln-27. The BetaSPN-type CS-alpha/beta domain maps to Gln-54–Phe-91. 3 disulfide bridges follow: Cys-57–Cys-78, Cys-64–Cys-83, and Cys-68–Cys-85.

This sequence belongs to the long chain scorpion toxin family. Class 1 subfamily. In terms of assembly, monomer (both chains). In terms of tissue distribution, expressed by the venom gland.

Its subcellular location is the secreted. Its function is as follows. Inhibits voltage-gated potassium channels (Kv). Does not activate Kv7 channels. Functionally, peptide activator of Kv7.4/KCNQ4 channels. Also acts as a subtype-selective activator of channels formed by Kv7.3/KCNQ3, Kv7.2/Kv7.3 (KCNQ2/KCNQ3), Kv7.5/Kv7.3 (KCNQ3/KCNQ5) subunits. This is Potassium channel toxin AaTXK-beta from Androctonus australis (Sahara scorpion).